Consider the following 675-residue polypeptide: Gastrula zinc finger protein xFG20-1 (675 aa).

C2H2-type zinc fingers lie at residues 62–84, 90–112, 118–140, 146–168, 174–196, 202–224, 257–279, 286–308, 344–366, and 373–395; these read FTCT…IRAH, FSCM…YSVH, FSCT…LRVH, YSCE…QRTH, FSCT…LKTH, HLCA…QKIH, FPCT…QSTH, and LPCT…QSTH. A disordered region spans residues 302–325; sequence RTHQSTHTEGQKSLPSTESGGTFS. Residues 304–325 are compositionally biased toward polar residues; the sequence is HQSTHTEGQKSLPSTESGGTFS. Positions 390 to 407 are enriched in polar residues; sequence THQSTHTSPSTEFGVQTT. The disordered stretch occupies residues 390-423; the sequence is THQSTHTSPSTEFGVQTTEDNHQSPSKDHTGEKP. Basic and acidic residues predominate over residues 408 to 421; the sequence is EDNHQSPSKDHTGE. C2H2-type zinc fingers lie at residues 424–446, 452–474, 480–501, 507–529, 535–557, 563–585, 591–613, and 619–642; these read FSCS…LVVH, YHCI…QRTH, FSCN…YRVH, YPCT…YKVH, YPCQ…LRTH, FSCT…LTTH, FSCT…YKMH, and FTCT…TTVH.

The protein belongs to the krueppel C2H2-type zinc-finger protein family.

Its subcellular location is the nucleus. In terms of biological role, may be involved in transcriptional regulation. This chain is Gastrula zinc finger protein xFG20-1, found in Xenopus laevis (African clawed frog).